The chain runs to 128 residues: ATP synthase epsilon chain (128 aa).

This sequence belongs to the ATPase epsilon chain family. In terms of assembly, F-type ATPases have 2 components, CF(1) - the catalytic core - and CF(0) - the membrane proton channel. CF(1) has five subunits: alpha(3), beta(3), gamma(1), delta(1), epsilon(1). CF(0) has three main subunits: a, b and c.

It is found in the cell inner membrane. Functionally, produces ATP from ADP in the presence of a proton gradient across the membrane. This chain is ATP synthase epsilon chain, found in Sulfurovum sp. (strain NBC37-1).